The sequence spans 342 residues: Autoinducer 2 import system permease protein LsrC (342 aa).

Residues 1-13 are Periplasmic-facing; the sequence is MLKFIQNNREITA. The helical transmembrane segment at 14–34 threads the bilayer; that stretch reads LLAVVLLFVLPGFLDRQYLSV. Residues 35-38 lie on the Cytoplasmic side of the membrane; it reads QTLT. A helical transmembrane segment spans residues 39–59; it reads MVYSSAQILILLAMGATLVML. Residues 60–69 lie on the Periplasmic side of the membrane; that stretch reads TRNIDVSVGS. A helical transmembrane segment spans residues 70-90; sequence ITGMCAVLLGMLLNAGYSLPV. Residues 91-92 lie on the Cytoplasmic side of the membrane; that stretch reads AC. Residues 93 to 113 traverse the membrane as a helical segment; sequence VTTLLLGLLAGFFNGVLVAWL. A topological domain (periplasmic) is located at residue K114. A helical membrane pass occupies residues 115–135; sequence IPAIVATLGTLGLYRGIMLLW. At 136–154 the chain is on the cytoplasmic side; sequence TGGKWIEGLPAELKQLSAP. The helical transmembrane segment at 155–175 threads the bilayer; it reads LLFGVSAIGWLTIILVAFMAW. At 176 to 212 the chain is on the periplasmic side; that stretch reads LLAKTAFGRSFYATGDNLQGARQLGVRTEAIRIVAFS. Residues 213–233 traverse the membrane as a helical segment; that stretch reads LNGCMAALAGIVFASQIGFIP. Residues 234–251 lie on the Cytoplasmic side of the membrane; it reads NQTGTGLEMKAIAACVLG. The helical transmembrane segment at 252-272 threads the bilayer; sequence GISLLGGSGAIIGAVLGAWFL. Residues 273–283 are Periplasmic-facing; the sequence is TQIDSVLVLLR. A helical membrane pass occupies residues 284-304; it reads IPAWWNDFIAGLVLLAVLVFD. Over 305-342 the chain is Cytoplasmic; sequence GRLRCALERNLRRQKYARFMTPPPSVKPASSGKKREAA.

This sequence belongs to the binding-protein-dependent transport system permease family. AraH/RbsC subfamily. As to quaternary structure, the complex is composed of two ATP-binding proteins (LsrA), two transmembrane proteins (LsrC and LsrD) and a solute-binding protein (LsrB).

It is found in the cell inner membrane. In terms of biological role, part of the ABC transporter complex LsrABCD involved in autoinducer 2 (AI-2) import. Probably responsible for the translocation of the substrate across the membrane. This is Autoinducer 2 import system permease protein LsrC (lsrC) from Escherichia coli O9:H4 (strain HS).